We begin with the raw amino-acid sequence, 388 residues long: Succinate--CoA ligase [ADP-forming] subunit beta (388 aa).

The ATP-grasp domain occupies 9–244 (KQLFAEYGLP…PSQEDEREAH (236 aa)). Residues K46, 53 to 55 (GRG), E99, T102, and E107 each bind ATP. The Mg(2+) site is built by N199 and D213. Substrate is bound by residues N264 and 321–323 (GIV).

This sequence belongs to the succinate/malate CoA ligase beta subunit family. As to quaternary structure, heterotetramer of two alpha and two beta subunits. Requires Mg(2+) as cofactor.

The catalysed reaction is succinate + ATP + CoA = succinyl-CoA + ADP + phosphate. The enzyme catalyses GTP + succinate + CoA = succinyl-CoA + GDP + phosphate. It functions in the pathway carbohydrate metabolism; tricarboxylic acid cycle; succinate from succinyl-CoA (ligase route): step 1/1. Functionally, succinyl-CoA synthetase functions in the citric acid cycle (TCA), coupling the hydrolysis of succinyl-CoA to the synthesis of either ATP or GTP and thus represents the only step of substrate-level phosphorylation in the TCA. The beta subunit provides nucleotide specificity of the enzyme and binds the substrate succinate, while the binding sites for coenzyme A and phosphate are found in the alpha subunit. The chain is Succinate--CoA ligase [ADP-forming] subunit beta from Colwellia psychrerythraea (strain 34H / ATCC BAA-681) (Vibrio psychroerythus).